The primary structure comprises 207 residues: Uracil phosphoribosyltransferase (207 aa).

5-phospho-alpha-D-ribose 1-diphosphate contacts are provided by residues Arg77, Arg102, and 129-137 (DPMLATGGS). Uracil-binding positions include Ile192 and 197 to 199 (GDA). Asp198 serves as a coordination point for 5-phospho-alpha-D-ribose 1-diphosphate.

Belongs to the UPRTase family. The cofactor is Mg(2+).

It catalyses the reaction UMP + diphosphate = 5-phospho-alpha-D-ribose 1-diphosphate + uracil. The protein operates within pyrimidine metabolism; UMP biosynthesis via salvage pathway; UMP from uracil: step 1/1. Allosterically activated by GTP. Functionally, catalyzes the conversion of uracil and 5-phospho-alpha-D-ribose 1-diphosphate (PRPP) to UMP and diphosphate. The sequence is that of Uracil phosphoribosyltransferase from Nocardia farcinica (strain IFM 10152).